The chain runs to 99 residues: (4S)-4-hydroxy-5-phosphonooxypentane-2,3-dione isomerase (99 aa).

The 90-residue stretch at 2–91 (HVTLVEINVK…ISEPRKKRSF (90 aa)) folds into the ABM domain.

The protein belongs to the LsrG family. Homodimer.

The protein localises to the cytoplasm. The enzyme catalyses (2S)-2-hydroxy-3,4-dioxopentyl phosphate = 3-hydroxy-2,4-dioxopentyl phosphate. Involved in the degradation of phospho-AI-2, thereby terminating induction of the lsr operon and closing the AI-2 signaling cycle. Catalyzes the conversion of (4S)-4-hydroxy-5-phosphonooxypentane-2,3-dione (P-DPD) to 3-hydroxy-5-phosphonooxypentane-2,4-dione (P-HPD). This is (4S)-4-hydroxy-5-phosphonooxypentane-2,3-dione isomerase from Photorhabdus laumondii subsp. laumondii (strain DSM 15139 / CIP 105565 / TT01) (Photorhabdus luminescens subsp. laumondii).